The following is a 131-amino-acid chain: Small ribosomal subunit protein uS8 (131 aa).

The protein belongs to the universal ribosomal protein uS8 family. In terms of assembly, part of the 30S ribosomal subunit. Contacts proteins S5 and S12.

One of the primary rRNA binding proteins, it binds directly to 16S rRNA central domain where it helps coordinate assembly of the platform of the 30S subunit. The protein is Small ribosomal subunit protein uS8 of Neorickettsia sennetsu (strain ATCC VR-367 / Miyayama) (Ehrlichia sennetsu).